The following is a 547-amino-acid chain: ATP synthase subunit alpha (547 aa).

173–180 (GDRATGKT) lines the ATP pocket. Residues 526–547 (PEAEALADEDVEQEQIVRQKRG) are disordered. Residues 528 to 538 (AEALADEDVEQ) are compositionally biased toward acidic residues.

This sequence belongs to the ATPase alpha/beta chains family. F-type ATPases have 2 components, CF(1) - the catalytic core - and CF(0) - the membrane proton channel. CF(1) has five subunits: alpha(3), beta(3), gamma(1), delta(1), epsilon(1). CF(0) has three main subunits: a(1), b(2) and c(9-12). The alpha and beta chains form an alternating ring which encloses part of the gamma chain. CF(1) is attached to CF(0) by a central stalk formed by the gamma and epsilon chains, while a peripheral stalk is formed by the delta and b chains.

It is found in the cell membrane. The catalysed reaction is ATP + H2O + 4 H(+)(in) = ADP + phosphate + 5 H(+)(out). Functionally, produces ATP from ADP in the presence of a proton gradient across the membrane. The alpha chain is a regulatory subunit. This chain is ATP synthase subunit alpha, found in Nocardioides sp. (strain ATCC BAA-499 / JS614).